Consider the following 396-residue polypeptide: MAEVNVRNFNINFGPQHPAAHGVLRMVLELDGEVVERVDPHIGLLHRGTEKLMETKTYLQAGPYLDRLDYVAPMNQEHAFVLAIEKLLGVEVPKRGQLIRVLFSEIGRILNHLLNVTTQAMDVGALTPPLWGFEQRERLMIFYERACGARLHANYFRPGGVHQDLPESLVEDIGNFIDPFLIALGKLDALITPNRIFKQRNVDIGVVSIDEAWARGFSGVMIRGAGVPWDLRKSQPYECYDEMEFDIPVGKNSDCYDRYLIRMEEMRQSAKIMRQCVDRLLSTEKNEPVSSLDRKIVPPKRCEMKSSMEALIHHFKLYTEGFRTPPGEVYVAVEAPKGEFGVYLVSDGTNKPYRVKLRAPGFAHLQAMDFLTRGHMLADATAILGSIDIVFGEVDR.

The protein belongs to the complex I 49 kDa subunit family. NDH-1 is composed of 14 different subunits. Subunits NuoB, C, D, E, F, and G constitute the peripheral sector of the complex.

Its subcellular location is the cell inner membrane. It catalyses the reaction a quinone + NADH + 5 H(+)(in) = a quinol + NAD(+) + 4 H(+)(out). In terms of biological role, NDH-1 shuttles electrons from NADH, via FMN and iron-sulfur (Fe-S) centers, to quinones in the respiratory chain. The immediate electron acceptor for the enzyme in this species is believed to be ubiquinone. Couples the redox reaction to proton translocation (for every two electrons transferred, four hydrogen ions are translocated across the cytoplasmic membrane), and thus conserves the redox energy in a proton gradient. This chain is NADH-quinone oxidoreductase subunit D, found in Bartonella henselae (strain ATCC 49882 / DSM 28221 / CCUG 30454 / Houston 1) (Rochalimaea henselae).